The chain runs to 390 residues: Zinc finger CCCH domain-containing protein 46 (390 aa).

The segment at 2–29 (SRRQEICRNFQRGSCKYGAQCRYLHASP) adopts a C3H1-type zinc-finger fold. Positions 27–129 (ASPHQQQQQQ…AAHTSCEDPQ (103 aa)) are disordered. A compositionally biased stretch (low complexity) spans 48 to 76 (GSRQQQQPSFGSQFQQQQQQQQKPNPFGF). The span at 106-129 (PTKQTEAVQPPQAQAAHTSCEDPQ) shows a compositional bias: polar residues. Positions 146-211 (WKLTCYAHLR…FTNLLNSARP (66 aa)) are required for transcriptional activation activity. A compositionally biased stretch (polar residues) spans 230-248 (SSFGASQTNGPPVFSSFSQ). Positions 230 to 284 (SSFGASQTNGPPVFSSFSQIGAATNIGPGPGTTAPGMPASSPFGHPSSAPLAAPT) are disordered. A compositionally biased stretch (low complexity) spans 250–268 (GAATNIGPGPGTTAPGMPA).

Interacts with GSK1 and GSK4. Phosphorylated on serine and threonine residues by GSK1. Phosphorylation represses nuclear localization. In terms of tissue distribution, expressed in the adaxial face of the collar, nodes and the basal region of elongating internodes.

The protein resides in the nucleus. It localises to the cytoplasm. Its function is as follows. Transcriptional activator that binds double-stranded DNA and the single-stranded RNA polymers poly(rA), poly(rU) and poly(rG), but not poly(rC). Mediates optimal plant architecture through brassinosteroid (BR) signaling. May act as a negative regulator in sterol homeostasis. Acts as a negative regulator of BR signaling. Binds to the specific DNA sequence 5'-CTCGC-3' of BZR1 promoter and negatively regulates BZR1. Acts as an antagonistic transcription factor of BZR1 to attenuate the BR signaling pathway and regulate leaf bending. Represses the expression of ILI1, and activates that of IBH1 to balance the regulation activity of BZR1. In Oryza sativa subsp. japonica (Rice), this protein is Zinc finger CCCH domain-containing protein 46.